Consider the following 273-residue polypeptide: MPLSTSLLGKTSTYKDSYDATLLFKIPRINNRNALGINSNNLPFYGVDIWNTYELSCINKKGKPWVGVGTFYIPTDSENIVESKSFKLYLNSFNNFVVESVEELERIILQDLSNVTHAKVTGRIFPINTKIAFGVPSGKNIDALDIVCNNYGPPDNSLVEYEEVLVEEEINSNLLKSNCLVTGQPDWGSIVIKYKGKKLKHDSFLKYLISFRNYHEFAEQCAERIFTDIKNAIKPDFLSLYIVYTRRGGIDICPYRSTDKSYSLPSDKRLIRQ.

81-83 serves as a coordination point for substrate; that stretch reads VES. 83–84 lines the NADPH pocket; sequence SK. The active-site Thioimide intermediate is C179. D186 (proton donor) is an active-site residue. 218-219 lines the substrate pocket; sequence AE. 247–248 contacts NADPH; the sequence is RG.

It belongs to the GTP cyclohydrolase I family. QueF type 2 subfamily. In terms of assembly, homodimer.

The protein resides in the cytoplasm. The catalysed reaction is 7-aminomethyl-7-carbaguanine + 2 NADP(+) = 7-cyano-7-deazaguanine + 2 NADPH + 3 H(+). It functions in the pathway tRNA modification; tRNA-queuosine biosynthesis. Its function is as follows. Catalyzes the NADPH-dependent reduction of 7-cyano-7-deazaguanine (preQ0) to 7-aminomethyl-7-deazaguanine (preQ1). The polypeptide is NADPH-dependent 7-cyano-7-deazaguanine reductase (Rickettsia akari (strain Hartford)).